The sequence spans 259 residues: ARGPKKHLKRINAPKSWMLNKLGGIWATRPSQGPHKLRESLPLSVLLKERLNYALNGRDVTLILNDKEGNVFVDQKVRRDKGYPTGLMDVVRIEKTDQSFRILYDTKGRFVLKSLSKEEAKYKLLKVTAKAIGPNQIPYIVTHDSRTIRFPNPEIKIGDTLKYDLVNNKIENFAHLESGNVCYIQQGNNIGRVGIIQHIEKHQGSFDICHVKDAKGNAFATRLGNIFVLGQGKKLYIELPSGDGVRETILEERKRKFSY.

Residues 41-105 (LPLSVLLKER…TDQSFRILYD (65 aa)) enclose the S4 RNA-binding domain. At Thr-248 the chain carries Phosphothreonine. At Ser-258 the chain carries Phosphoserine.

This sequence belongs to the eukaryotic ribosomal protein eS4 family.

This is Small ribosomal subunit protein eS4 from Tetrahymena thermophila.